The primary structure comprises 287 residues: Protease HtpX homolog (287 aa).

2 helical membrane passes run 4-24 (VGLFLATNLAILLLLGLVMSL) and 35-53 (LLLMAGCFGMGGSLISLAL). Zn(2+) is bound at residue His139. Glu140 is an active-site residue. His143 contacts Zn(2+). Transmembrane regions (helical) follow at residues 147-167 (GDMVTLSLIQGVLNTFVIFLS) and 194-214 (AVSMLLEFVFGLFASMIVMWF). Residue Glu219 coordinates Zn(2+).

Belongs to the peptidase M48B family. It depends on Zn(2+) as a cofactor.

It is found in the cell inner membrane. The chain is Protease HtpX homolog from Desulfotalea psychrophila (strain LSv54 / DSM 12343).